The sequence spans 276 residues: Undecaprenyl-diphosphatase 1 (276 aa).

A run of 6 helical transmembrane segments spans residues 44–63, 85–105, 109–129, 183–203, 214–234, and 249–269; these read ALAF…IWEY, VNLL…ADLI, LFNP…MLWA, AATE…AVYS, GDFA…MLAV, and FAWY…LGMI.

This sequence belongs to the UppP family.

It is found in the cell inner membrane. The enzyme catalyses di-trans,octa-cis-undecaprenyl diphosphate + H2O = di-trans,octa-cis-undecaprenyl phosphate + phosphate + H(+). Catalyzes the dephosphorylation of undecaprenyl diphosphate (UPP). Confers resistance to bacitracin. This chain is Undecaprenyl-diphosphatase 1, found in Stutzerimonas stutzeri (strain A1501) (Pseudomonas stutzeri).